The following is a 62-amino-acid chain: Chromatin protein Cren7 1 (62 aa).

It belongs to the Cren7 family. Monomer. Methylated at multiple sites, to varying extents.

The protein localises to the chromosome. Its subcellular location is the cytoplasm. Its function is as follows. A chromatin protein, binds double-stranded DNA without sequence specificity. Constrains negative DNA supercoils. This is Chromatin protein Cren7 1 (cren7-1) from Hyperthermus butylicus (strain DSM 5456 / JCM 9403 / PLM1-5).